We begin with the raw amino-acid sequence, 151 residues long: Small ribosomal subunit protein uS13 (151 aa).

The protein belongs to the universal ribosomal protein uS13 family. As to quaternary structure, part of the 30S ribosomal subunit. Forms a loose heterodimer with protein S19. Forms two bridges to the 50S subunit in the 70S ribosome.

Located at the top of the head of the 30S subunit, it contacts several helices of the 16S rRNA. In the 70S ribosome it contacts the 23S rRNA (bridge B1a) and protein L5 of the 50S subunit (bridge B1b), connecting the 2 subunits; these bridges are implicated in subunit movement. This chain is Small ribosomal subunit protein uS13, found in Methanospirillum hungatei JF-1 (strain ATCC 27890 / DSM 864 / NBRC 100397 / JF-1).